Here is a 502-residue protein sequence, read N- to C-terminus: MSELRDTRLEKARTLEELGQGPYALTFSPSHRMAELQVTHADLPKGEERDVSVSVAGRVMTRRVMGKLAFFTLADETGSIQLFLEKAGLEAQQEGWFKQITSLVDSGDWLGVSGTLRRTDRGELSVKVSDWRMLTKALQPLPDKWHGLADVEKRYRQRYLDLVVSPDSRETFRRRARLVSGIRRWLDQRDFLEIETPVLQSEPGGADARPFETHHNALDLPLTLRIATELHLKRLVVGGFERVYELGRIFRNEGVSTRHNPEFTSVEIYQAYSDYVGMMELTEQMVSAVCEEVCGTTTITYQGTEIDLAPPWRRATMHELVQDATGLDFNGFSSREEAAAAMTAKGLHAPELADSVGRLLNEAFEQAVETTLIQPTFVTDYPVEISPLARPHRSKPGLVERFELFIVGREHANAFSELTDPVDQRQRLEAQQARKAAGDLEAQGLDEDFVMALEVGMPPTGGLGIGIDRLVMLLTDCPSIRDVIAFPLLRPESRKGEPPSVE.

Mg(2+)-binding residues include Glu-403 and Glu-410.

The protein belongs to the class-II aminoacyl-tRNA synthetase family. Homodimer. Mg(2+) is required as a cofactor.

The protein localises to the cytoplasm. It catalyses the reaction tRNA(Lys) + L-lysine + ATP = L-lysyl-tRNA(Lys) + AMP + diphosphate. In Synechococcus sp. (strain CC9605), this protein is Lysine--tRNA ligase.